The primary structure comprises 108 residues: MATSKLQAIWNHPAGPKTIHFWAPTFKWGISIANIADFAKPPEKLSYPQQIAVTCTGVIWSRYSMVINPKNWNLFSVNVAMAGTGIYQLARKIKHDYATEAEPAVASE.

Helical transmembrane passes span 19–35, 51–67, and 74–90; these read IHFW…IANI, IAVT…SMVI, and LFSV…YQLA.

It belongs to the mitochondrial pyruvate carrier (MPC) (TC 2.A.105) family.

It is found in the mitochondrion inner membrane. Mediates the uptake of pyruvate into mitochondria. The chain is Mitochondrial pyruvate carrier 4 from Arabidopsis thaliana (Mouse-ear cress).